Here is an 84-residue protein sequence, read N- to C-terminus: Beta-defensin 119 (84 aa).

Positions 1–21 (MKLLYLFLAILLAIEEPVISG) are cleaved as a signal peptide. 3 disulfide bridges follow: Cys-28–Cys-55, Cys-35–Cys-49, and Cys-39–Cys-56.

It belongs to the beta-defensin family.

The protein resides in the secreted. Functionally, has antibacterial activity. The polypeptide is Beta-defensin 119 (DEFB119) (Hylobates lar (Lar gibbon)).